A 387-amino-acid chain; its full sequence is Signal-regulatory protein gamma (387 aa).

A signal peptide spans 1–28; sequence MPVPASWPHPPGPFLLLTLLLGLTEVAG. The Ig-like V-type domain maps to 29–137; sequence EEELQMIQPE…ENVEFKSGPG (109 aa). Residues 29–360 lie on the Extracellular side of the membrane; that stretch reads EEELQMIQPE…QKDQSSDATP (332 aa). 2 disulfides stabilise this stretch: cysteine 53-cysteine 119 and cysteine 168-cysteine 226. Ig-like C1-type domains lie at 146-245 and 252-340; these read PSAP…ANLS and PTLE…LAVS. N-linked (GlcNAc...) asparagine glycosylation is found at asparagine 243, asparagine 268, asparagine 309, and asparagine 317. A disulfide bond links cysteine 271 and cysteine 329. A helical transmembrane segment spans residues 361-383; it reads GPASSLTALLLIAVLLGPIYVPW. Over 384–387 the chain is Cytoplasmic; the sequence is KQKT.

As to quaternary structure, interacts with CD47. Detected in liver, and at very low levels in brain, heart, lung, pancreas, kidney, placenta and skeletal muscle. Expressed on CD4+ T-cells, CD8+ T-cells, CD56-bright natural killer (NK) cells, CD20+ cells, and all activated NK cells. Mainly present in the paracortical T-cell area of lymph nodes, with only sparse positive cells in the mantle and in the germinal center of B-cell follicles. In the thymus, primarily expressed in the medulla on mature T-lymphocytes that have undergone thymic selection.

The protein localises to the membrane. Its function is as follows. Probable immunoglobulin-like cell surface receptor. On binding with CD47, mediates cell-cell adhesion. Engagement on T-cells by CD47 on antigen-presenting cells results in enhanced antigen-specific T-cell proliferation and costimulates T-cell activation. The sequence is that of Signal-regulatory protein gamma (SIRPG) from Homo sapiens (Human).